A 204-amino-acid polypeptide reads, in one-letter code: Proteasome subunit beta type-3 (204 aa).

Belongs to the peptidase T1B family. As to quaternary structure, the 26S proteasome consists of a 20S proteasome core and two 19S regulatory subunits. The 20S proteasome core is composed of 28 subunits that are arranged in four stacked rings, resulting in a barrel-shaped structure. The two end rings are each formed by seven alpha subunits, and the two central rings are each formed by seven beta subunits. The catalytic chamber with the active sites is on the inside of the barrel.

The protein resides in the cytoplasm. Its subcellular location is the nucleus. Functionally, non-catalytic component of the proteasome, a multicatalytic proteinase complex which is characterized by its ability to cleave peptides with Arg, Phe, Tyr, Leu, and Glu adjacent to the leaving group at neutral or slightly basic pH. The proteasome has an ATP-dependent proteolytic activity. The chain is Proteasome subunit beta type-3 (pbs-3) from Caenorhabditis elegans.